A 238-amino-acid chain; its full sequence is Probable septum site-determining protein MinC (238 aa).

This sequence belongs to the MinC family. In terms of assembly, interacts with MinD and FtsZ.

Cell division inhibitor that blocks the formation of polar Z ring septums. Rapidly oscillates between the poles of the cell to destabilize FtsZ filaments that have formed before they mature into polar Z rings. Prevents FtsZ polymerization. This is Probable septum site-determining protein MinC from Blochmanniella floridana.